Consider the following 310-residue polypeptide: Glutaminase 1 (310 aa).

Residues serine 66, asparagine 117, glutamate 161, asparagine 168, tyrosine 192, tyrosine 244, and valine 262 each contribute to the substrate site. The residue at position 294 (lysine 294) is an N6-acetyllysine.

The protein belongs to the glutaminase family. In terms of assembly, homotetramer.

The catalysed reaction is L-glutamine + H2O = L-glutamate + NH4(+). This is Glutaminase 1 from Escherichia coli O6:H1 (strain CFT073 / ATCC 700928 / UPEC).